A 642-amino-acid chain; its full sequence is Ribosome biogenesis protein BOP1 homolog (642 aa).

The disordered stretch occupies residues 1-28; it reads MIHKRMNSTELERTSKKIDDYDSSDEED. Basic and acidic residues predominate over residues 10–20; sequence ELERTSKKIDD. WD repeat units follow at residues 311–351, 353–393, 472–510, 513–552, 556–595, and 612–642; these read GHSG…CLKT, SLDG…DRHR, RLKG…LKKK, TGSQ…KPWK, HHTA…DSLK, and KNGL…ALFT.

It belongs to the WD repeat BOP1/ERB1 family.

It localises to the nucleus. The protein resides in the nucleolus. Its subcellular location is the nucleoplasm. Functionally, required for maturation of ribosomal RNAs and formation of the large ribosomal subunit. The polypeptide is Ribosome biogenesis protein BOP1 homolog (Brugia malayi (Filarial nematode worm)).